Reading from the N-terminus, the 342-residue chain is MATH domain and coiled-coil domain-containing protein At3g44800 (342 aa).

Positions 3–129 (YEKFTWVIKN…NNEVKIVAEV (127 aa)) constitute an MATH domain. Residues 253 to 327 (KVDWLERKLE…ALLEKEKGKV (75 aa)) adopt a coiled-coil conformation.

The protein is MATH domain and coiled-coil domain-containing protein At3g44800 of Arabidopsis thaliana (Mouse-ear cress).